The chain runs to 224 residues: Phosphoribosylformylglycinamidine synthase subunit PurQ (224 aa).

One can recognise a Glutamine amidotransferase type-1 domain in the interval arginine 4–glycine 224. Residue cysteine 87 is the Nucleophile of the active site. Active-site residues include histidine 195 and glutamate 197.

As to quaternary structure, part of the FGAM synthase complex composed of 1 PurL, 1 PurQ and 2 PurS subunits.

It is found in the cytoplasm. The enzyme catalyses N(2)-formyl-N(1)-(5-phospho-beta-D-ribosyl)glycinamide + L-glutamine + ATP + H2O = 2-formamido-N(1)-(5-O-phospho-beta-D-ribosyl)acetamidine + L-glutamate + ADP + phosphate + H(+). It carries out the reaction L-glutamine + H2O = L-glutamate + NH4(+). It functions in the pathway purine metabolism; IMP biosynthesis via de novo pathway; 5-amino-1-(5-phospho-D-ribosyl)imidazole from N(2)-formyl-N(1)-(5-phospho-D-ribosyl)glycinamide: step 1/2. Its function is as follows. Part of the phosphoribosylformylglycinamidine synthase complex involved in the purines biosynthetic pathway. Catalyzes the ATP-dependent conversion of formylglycinamide ribonucleotide (FGAR) and glutamine to yield formylglycinamidine ribonucleotide (FGAM) and glutamate. The FGAM synthase complex is composed of three subunits. PurQ produces an ammonia molecule by converting glutamine to glutamate. PurL transfers the ammonia molecule to FGAR to form FGAM in an ATP-dependent manner. PurS interacts with PurQ and PurL and is thought to assist in the transfer of the ammonia molecule from PurQ to PurL. The sequence is that of Phosphoribosylformylglycinamidine synthase subunit PurQ from Mycobacterium bovis (strain ATCC BAA-935 / AF2122/97).